The chain runs to 185 residues: Elongation factor P (185 aa).

It belongs to the elongation factor P family.

The protein resides in the cytoplasm. Its pathway is protein biosynthesis; polypeptide chain elongation. Functionally, involved in peptide bond synthesis. Stimulates efficient translation and peptide-bond synthesis on native or reconstituted 70S ribosomes in vitro. Probably functions indirectly by altering the affinity of the ribosome for aminoacyl-tRNA, thus increasing their reactivity as acceptors for peptidyl transferase. This Bacillus cereus (strain G9842) protein is Elongation factor P.